The sequence spans 306 residues: Pantothenate kinase (306 aa).

91 to 98 (GSVAVGKS) is a binding site for ATP.

It belongs to the prokaryotic pantothenate kinase family.

The protein localises to the cytoplasm. The enzyme catalyses (R)-pantothenate + ATP = (R)-4'-phosphopantothenate + ADP + H(+). It participates in cofactor biosynthesis; coenzyme A biosynthesis; CoA from (R)-pantothenate: step 1/5. The sequence is that of Pantothenate kinase from Streptococcus thermophilus (strain CNRZ 1066).